A 341-amino-acid polypeptide reads, in one-letter code: Phenylalanine--tRNA ligase alpha subunit (341 aa).

Position 256 (glutamate 256) interacts with Mg(2+).

The protein belongs to the class-II aminoacyl-tRNA synthetase family. Phe-tRNA synthetase alpha subunit type 1 subfamily. Tetramer of two alpha and two beta subunits. Mg(2+) serves as cofactor.

The protein resides in the cytoplasm. It catalyses the reaction tRNA(Phe) + L-phenylalanine + ATP = L-phenylalanyl-tRNA(Phe) + AMP + diphosphate + H(+). This Chlamydia muridarum (strain MoPn / Nigg) protein is Phenylalanine--tRNA ligase alpha subunit (pheS).